A 412-amino-acid polypeptide reads, in one-letter code: Solute carrier family 22 member 18 (412 aa).

10 consecutive transmembrane segments (helical) span residues 16 to 36 (GIIILTYVLAALELTCLFMQF), 51 to 71 (VSFGYLQTTFGVLQLLGGPVF), 117 to 137 (LPAALMHTLPAAQMVITDLTA), 148 to 168 (LGLCFGIGVIFGSLLGGTLST), 176 to 196 (AFLAFVVTLLGAVLSFTCIPV), 232 to 252 (FLVKVISGFPSGLFMVMFSII), 264 to 284 (AGYLMSFFGILQMMIQGLVIG), 294 to 314 (ALLRSSVLVFAVVGLGMALMS), 316 to 336 (VFHFCLLLPGLVFSLCALNIV), and 380 to 400 (GVSILGHVQLMVNLLVLLVLW).

The protein belongs to the major facilitator (TC 2.A.1) superfamily. Organic cation transporter (TC 2.A.1.19) family.

Its subcellular location is the apical cell membrane. May act as a transporter of organic cations based on a proton efflux antiport mechanism. May play a role in the transport of chloroquine and quinidine-related compounds in kidney. Plays a role in the regulation of lipid metabolism. This Rattus norvegicus (Rat) protein is Solute carrier family 22 member 18 (Slc67a1).